Here is a 542-residue protein sequence, read N- to C-terminus: MPLRDETLREVWASDSGHEEESLSPEAPRRPKQRPAPAQRLRKKRTEAPESPCPTGSKPRKPGAGRTGRPREEPSPDPAQARAPQTVYARFLRDPEAKKRDPRETFLVARAPDAEDEEEEEEEDEEDEEEEAEEKKEKILLPPKKPLREKSSADLKERRAKAQGPRGDLGSPDPPPKPLRVRNKEAPAGEGTKMRKTKKKGSGEADKDPSGSPASARKSPAAMFLVGEGSPDKKALKKKGTPKGARKEEEEEEEAATVIKKSNQKGKAKGKGKKKAKEERAPSPPVEVDEPREFVLRPAPQGRTVRCRLTRDKKGMDRGMYPSYFLHLDTEKKVFLLAGRKRKRSKTANYLISIDPTNLSRGGENFIGKLRSNLLGNRFTVFDNGQNPQRGYSTNVASLRQELAAVIYETNVLGFRGPRRMTVIIPGMSAENERVPIRPRNASDGLLVRWQNKTLESLIELHNKPPVWNDDSGSYTLNFQGRVTQASVKNFQIVHADDPDYIVLQFGRVAEDAFTLDYRYPLCALQAFAIALSSFDGKLACE.

The tract at residues 1-289 is disordered; it reads MPLRDETLRE…RAPSPPVEVD (289 aa). Residues 91-104 are compositionally biased toward basic and acidic residues; that stretch reads FLRDPEAKKRDPRE. The segment covering 114 to 132 has biased composition (acidic residues); it reads AEDEEEEEEEDEEDEEEEA. Residues 146–157 show a composition bias toward basic and acidic residues; it reads PLREKSSADLKE. The segment covering 262–275 has biased composition (basic residues); that stretch reads SNQKGKAKGKGKKK.

It belongs to the TUB family. As to quaternary structure, homodimer. May interact with ABCF1, PSIP1, ZEB1 and HMGB2 (Potential). Interacts with DNM1. Interacts with F-actin. Interacts with TUB. Interacts with TYRO3. Retina-specific.

The protein resides in the cytoplasm. The protein localises to the cell membrane. It is found in the secreted. Its subcellular location is the synapse. In terms of biological role, required for normal development of photoreceptor synapses. Required for normal photoreceptor function and for long-term survival of photoreceptor cells. Interacts with cytoskeleton proteins and may play a role in protein transport in photoreceptor cells. Binds lipids, especially phosphatidylinositol 3-phosphate, phosphatidylinositol 4-phosphate, phosphatidylinositol 5-phosphate, phosphatidylinositol 3,4-bisphosphate, phosphatidylinositol 4,5-bisphosphate, phosphatidylinositol 3,4,5-bisphosphate, phosphatidylserine and phosphatidic acid (in vitro). Contribute to stimulation of phagocytosis of apoptotic retinal pigment epithelium (RPE) cells and macrophages. This is Tubby-related protein 1 (TULP1) from Homo sapiens (Human).